Consider the following 35-residue polypeptide: Potassium channel toxin alpha-KTx 6.12 (35 aa).

Gln1 carries the pyrrolidone carboxylic acid modification. 4 disulfides stabilise this stretch: Cys4-Cys24, Cys10-Cys29, Cys14-Cys31, and Cys19-Cys34. Lys35 bears the Lysine amide mark.

It belongs to the short scorpion toxin superfamily. Potassium channel inhibitor family. Alpha-KTx 06 subfamily. As to quaternary structure, monomer. As to expression, expressed by the venom gland.

The protein resides in the secreted. In terms of biological role, high affinity blocker of Kv1.3/KCNA3 channels of human T cells. Blocks Kv1.2/KCNA2 with an order of magnitude smaller than for Kv1.3/KCNA3. This chain is Potassium channel toxin alpha-KTx 6.12, found in Anuroctonus phaiodactylus (Mafia scorpion).